Here is a 135-residue protein sequence, read N- to C-terminus: Large ribosomal subunit protein uL22 (135 aa).

Residues 112–135 (KKPEKKKLKAKSAKTEEAPKAAEV) are disordered. Over residues 124–135 (AKTEEAPKAAEV) the composition is skewed to basic and acidic residues.

This sequence belongs to the universal ribosomal protein uL22 family. As to quaternary structure, part of the 50S ribosomal subunit.

In terms of biological role, this protein binds specifically to 23S rRNA; its binding is stimulated by other ribosomal proteins, e.g. L4, L17, and L20. It is important during the early stages of 50S assembly. It makes multiple contacts with different domains of the 23S rRNA in the assembled 50S subunit and ribosome. Functionally, the globular domain of the protein is located near the polypeptide exit tunnel on the outside of the subunit, while an extended beta-hairpin is found that lines the wall of the exit tunnel in the center of the 70S ribosome. The sequence is that of Large ribosomal subunit protein uL22 from Brachyspira hyodysenteriae (strain ATCC 49526 / WA1).